The sequence spans 466 residues: Ribulose bisphosphate carboxylase large chain (466 aa).

At Lys-5 the chain carries N6,N6,N6-trimethyllysine. 2 residues coordinate substrate: Asn-114 and Thr-164. Residue Lys-166 is the Proton acceptor of the active site. Lys-168 provides a ligand contact to substrate. Residues Lys-192, Asp-194, and Glu-195 each contribute to the Mg(2+) site. At Lys-192 the chain carries N6-carboxylysine. His-285 acts as the Proton acceptor in catalysis. Substrate contacts are provided by Arg-286, His-318, and Ser-370.

Belongs to the RuBisCO large chain family. Type I subfamily. Heterohexadecamer of 8 large chains and 8 small chains; disulfide-linked. The disulfide link is formed within the large subunit homodimers. Requires Mg(2+) as cofactor. Post-translationally, the disulfide bond which can form in the large chain dimeric partners within the hexadecamer appears to be associated with oxidative stress and protein turnover.

Its subcellular location is the plastid. The protein resides in the chloroplast. The catalysed reaction is 2 (2R)-3-phosphoglycerate + 2 H(+) = D-ribulose 1,5-bisphosphate + CO2 + H2O. It catalyses the reaction D-ribulose 1,5-bisphosphate + O2 = 2-phosphoglycolate + (2R)-3-phosphoglycerate + 2 H(+). In terms of biological role, ruBisCO catalyzes two reactions: the carboxylation of D-ribulose 1,5-bisphosphate, the primary event in carbon dioxide fixation, as well as the oxidative fragmentation of the pentose substrate in the photorespiration process. Both reactions occur simultaneously and in competition at the same active site. The chain is Ribulose bisphosphate carboxylase large chain from Eremothamnus marlothianus.